Consider the following 131-residue polypeptide: Profilin-9 (131 aa).

A disulfide bond links cysteine 13 and cysteine 115. Positions 81-97 (AVIRGKKGSGGITVKKT) match the Involved in PIP2 interaction motif. Residue threonine 111 is modified to Phosphothreonine.

Belongs to the profilin family. As to quaternary structure, occurs in many kinds of cells as a complex with monomeric actin in a 1:1 ratio. Post-translationally, phosphorylated by MAP kinases.

The protein resides in the cytoplasm. The protein localises to the cytoskeleton. Binds to actin and affects the structure of the cytoskeleton. At high concentrations, profilin prevents the polymerization of actin, whereas it enhances it at low concentrations. The polypeptide is Profilin-9 (Zea mays (Maize)).